Reading from the N-terminus, the 496-residue chain is Glycerol kinase (496 aa).

Thr11 is a binding site for ADP. Residues Thr11, Thr12, and Ser13 each coordinate ATP. Thr11 contributes to the sn-glycerol 3-phosphate binding site. Residue Arg15 coordinates ADP. Arg81, Glu82, Tyr133, and Asp242 together coordinate sn-glycerol 3-phosphate. Residues Arg81, Glu82, Tyr133, Asp242, and Gln243 each contribute to the glycerol site. ADP contacts are provided by Thr264 and Gly307. Residues Thr264, Gly307, Gln311, and Gly408 each contribute to the ATP site. Positions 408 and 412 each coordinate ADP.

Belongs to the FGGY kinase family.

It catalyses the reaction glycerol + ATP = sn-glycerol 3-phosphate + ADP + H(+). Its pathway is polyol metabolism; glycerol degradation via glycerol kinase pathway; sn-glycerol 3-phosphate from glycerol: step 1/1. With respect to regulation, inhibited by fructose 1,6-bisphosphate (FBP). Functionally, key enzyme in the regulation of glycerol uptake and metabolism. Catalyzes the phosphorylation of glycerol to yield sn-glycerol 3-phosphate. The chain is Glycerol kinase from Trichlorobacter lovleyi (strain ATCC BAA-1151 / DSM 17278 / SZ) (Geobacter lovleyi).